The sequence spans 1351 residues: MFLIIFILPTTLAVIGDFNCTNSFINDYNKTIPRISEDVVDVSLGLGTYYVLNRVYLNTTLLFTGYFPKSGANFRDLALKGSIYLSTLWYKPPFLSDFNNGIFSKVKNTKLYVNNTLYSEFSTIVIGSVFVNTSYTIVVQPHNGILEITACQYTMCEYPHTVCKSKGSIRNESWHIDSSEPLCLFKKNFTYNVSADWLYFHFYQERGVFYAYYADVGMPTTFLFSLYLGTILSHYYVMPLTCNAISSNTDNETLEYWVTPLSRRQYLLNFDEHGVITNAVDCSSSFLSEIQCKTQSFAPNTGVYDLSGFTVKPVATVYRRIPNLPDCDIDNWLNNVSVPSPLNWERRIFSNCNFNLSTLLRLVHVDSFSCNNLDKSKIFGSCFNSITVDKFAIPNRRRDDLQLGSSGFLQSSNYKIDISSSSCQLYYSLPLVNVTINNFNPSSWNRRYGFGSFNLSSYDVVYSDHCFSVNSDFCPCADPSVVNSCAKSKPPSAICPAGTKYRHCDLDTTLYVKNWCRCSCLPDPISTYSPNTCPQKKVVVGIGEHCPGLGINEEKCGTQLNHSSCFCSPDAFLGWSFDSCISNNRCNIFSNFIFNGINSGTTCSNDLLYSNTEISTGVCVNYDLYGITGQGIFKEVSAAYYNNWQNLLYDSNGNIIGFKDFLTNKTYTILPCYSGRVSAAFYQNSSSPALLYRNLKCSYVLNNISFISQPFYFDSYLGCVLNAVNLTSYSVSSCDLRMGSGFCIDYALPSSRRKRRGISSPYRFVTFEPFNVSFVNDSVETVGGLFEIQIPTNFTIAGHEEFIQTSSPKVTIDCSAFVCSNYAACHDLLSEYGTFCDNINSILNEVNDLLDITQLQVANALMQGVTLSSNLNTNLHSDVDNIDFKSLLGCLGSQCGSSSRSLLEDLLFNKVKLSDVGFVEAYNNCTGGSEIRDLLCVQSFNGIKVLPPILSETQISGYTTAATVAAMFPPWSAAAGVPFSLNVQYRINGLGVTMDVLNKNQKLIANAFNKALLSIQNGFTATNSALAKIQSVVNANAQALNSLLQQLFNKFGAISSSLQEILSRLDNLEAQVQIDRLINGRLTALNAYVSQQLSDITLIKAGASRAIEKVNECVKSQSPRINFCGNGNHILSLVQNAPYGLLFIHFSYKPTSFKTVLVSPGLCLSGDRGIAPKQGYFIKQNDSWMFTGSSYYYPEPISDKNVVFMNSCSVNFTKAPFIYLNNSIPNLSDFEAELSLWFKNHTSIAPNLTFNSHINATFLDLYYEMNVIQESIKSLNSSFINLKEIGTYEMYVKWPWYIWLLIVILFIIFLMILFFICCCTGCGSACFSKCHNCCDEYGGHNDFVIKASHDD.

A signal peptide spans 1-12; that stretch reads MFLIIFILPTTL. Topologically, residues 13–1295 are extracellular; the sequence is AVIGDFNCTN…GTYEMYVKWP (1283 aa). A BetaCoV S1-NTD domain is found at 14–294; that stretch reads VIGDFNCTNS…SFLSEIQCKT (281 aa). N-linked (GlcNAc...) asparagine; by host glycans are attached at residues asparagine 19, asparagine 29, asparagine 58, asparagine 114, asparagine 132, asparagine 171, asparagine 188, asparagine 192, and asparagine 251. Disulfide bonds link cysteine 20–cysteine 156, cysteine 151–cysteine 183, and cysteine 163–cysteine 242. Disulfide bonds link cysteine 282/cysteine 292 and cysteine 327/cysteine 352. The region spanning 325–605 is the BetaCoV S1-CTD domain; that stretch reads PDCDIDNWLN…GINSGTTCSN (281 aa). Asparagine 335 and asparagine 355 each carry an N-linked (GlcNAc...) asparagine; by host glycan. 2 disulfide bridges follow: cysteine 370–cysteine 423 and cysteine 382–cysteine 603. Asparagine 433, asparagine 454, asparagine 561, asparagine 664, asparagine 684, asparagine 703, asparagine 725, asparagine 771, asparagine 776, and asparagine 793 each carry an N-linked (GlcNAc...) asparagine; by host glycan. Fusion peptide stretches follow at residues 901-922 and 920-940; these read SLLE…VEAY and EAYN…VQSF. Residue asparagine 924 is glycosylated (N-linked (GlcNAc...) asparagine; by host). Cysteine 925 and cysteine 936 are joined by a disulfide. The tract at residues 1001–1051 is heptad repeat 1; sequence QKLIANAFNKALLSIQNGFTATNSALAKIQSVVNANAQALNSLLQQLFNKF. The stretch at 1030–1074 forms a coiled coil; that stretch reads QSVVNANAQALNSLLQQLFNKFGAISSSLQEILSRLDNLEAQVQI. 8 N-linked (GlcNAc...) asparagine; by host glycosylation sites follow: asparagine 1181, asparagine 1211, asparagine 1221, asparagine 1226, asparagine 1240, asparagine 1247, asparagine 1255, and asparagine 1276. Residues 1245-1284 are heptad repeat 2; the sequence is APNLTFNSHINATFLDLYYEMNVIQESIKSLNSSFINLKE. Positions 1257–1285 form a coiled coil; sequence TFLDLYYEMNVIQESIKSLNSSFINLKEI. A helical membrane pass occupies residues 1296 to 1316; the sequence is WYIWLLIVILFIIFLMILFFI. Residues 1317 to 1351 lie on the Cytoplasmic side of the membrane; that stretch reads CCCTGCGSACFSKCHNCCDEYGGHNDFVIKASHDD. Residues 1347 to 1351 carry the KxHxx motif; the sequence is ASHDD.

It belongs to the betacoronaviruses spike protein family. In terms of assembly, homotrimer; each monomer consists of a S1 and a S2 subunit. The resulting peplomers protrude from the virus surface as spikes. Specific enzymatic cleavages in vivo yield mature proteins. The precursor is processed into S1 and S2 by host cell furin or another cellular protease to yield the mature S1 and S2 proteins. Additionally, a second cleavage leads to the release of a fusion peptide after viral attachment to host cell receptor. Post-translationally, the cytoplasmic Cys-rich domain is palmitoylated. Spike glycoprotein is digested within host endosomes.

The protein localises to the virion membrane. It localises to the host endoplasmic reticulum-Golgi intermediate compartment membrane. Its subcellular location is the host cell membrane. Functionally, attaches the virion to the cell membrane by interacting with host receptor, initiating the infection. Mediates fusion of the virion and cellular membranes by acting as a class I viral fusion protein. Under the current model, the protein has at least three conformational states: pre-fusion native state, pre-hairpin intermediate state, and post-fusion hairpin state. During viral and target cell membrane fusion, the coiled coil regions (heptad repeats) assume a trimer-of-hairpins structure, positioning the fusion peptide in close proximity to the C-terminal region of the ectodomain. The formation of this structure appears to drive apposition and subsequent fusion of viral and target cell membranes. Its function is as follows. Acts as a viral fusion peptide which is unmasked following S2 cleavage occurring upon virus endocytosis. The polypeptide is Spike glycoprotein (Human coronavirus HKU1 (isolate N5) (HCoV-HKU1)).